An 87-amino-acid chain; its full sequence is Small ribosomal subunit protein bS20 (87 aa).

The interval 1–20 is disordered; that stretch reads MANHKSAEKRARQTIKKTER.

It belongs to the bacterial ribosomal protein bS20 family.

In terms of biological role, binds directly to 16S ribosomal RNA. This chain is Small ribosomal subunit protein bS20, found in Campylobacter jejuni subsp. jejuni serotype O:2 (strain ATCC 700819 / NCTC 11168).